The sequence spans 300 residues: Ornithine carbamoyltransferase (300 aa).

Residues 49 to 52 (STRT), Gln76, Arg100, and 127 to 130 (HPCQ) each bind carbamoyl phosphate. L-ornithine contacts are provided by residues Asn158, Asp218, and 222–223 (SM). Carbamoyl phosphate contacts are provided by residues 258–259 (CL) and Arg286.

The protein belongs to the aspartate/ornithine carbamoyltransferase superfamily. OTCase family.

The protein resides in the cytoplasm. The catalysed reaction is carbamoyl phosphate + L-ornithine = L-citrulline + phosphate + H(+). Its pathway is amino-acid biosynthesis; L-arginine biosynthesis; L-arginine from L-ornithine and carbamoyl phosphate: step 1/3. Reversibly catalyzes the transfer of the carbamoyl group from carbamoyl phosphate (CP) to the N(epsilon) atom of ornithine (ORN) to produce L-citrulline. The polypeptide is Ornithine carbamoyltransferase (Nitratidesulfovibrio vulgaris (strain ATCC 29579 / DSM 644 / CCUG 34227 / NCIMB 8303 / VKM B-1760 / Hildenborough) (Desulfovibrio vulgaris)).